A 230-amino-acid chain; its full sequence is uncharacterized protein (230 aa).

A helical membrane pass occupies residues 17 to 37 (AGALSLGIGFFALASALWFLI). Asparagine 126 carries an N-linked (GlcNAc...) asparagine glycan.

It localises to the membrane. This is an uncharacterized protein from Mus musculus (Mouse).